The following is a 517-amino-acid chain: Fluconazole resistance protein 1 (517 aa).

A DNA-binding region (zn(2)-C6 fungal-type) is located at residues Cys-26–Cys-52. 4 disordered regions span residues Lys-106–Thr-137, Ser-250–Gln-270, Ser-284–Ser-307, and Gly-378–Phe-403. The span at Ser-113–Ser-124 shows a compositional bias: low complexity. A compositionally biased stretch (polar residues) spans Ser-250–Pro-260. Over residues Gln-261 to Gln-270 the composition is skewed to low complexity. Residues Asn-298–Ser-307 are compositionally biased toward polar residues. The span at Gly-388 to Ser-398 shows a compositional bias: basic residues.

The protein localises to the nucleus. In terms of biological role, transcription factor that acts as a negative regulator of fluconazole resistance in C.albicans. Also confers fluconazole resistance in S.cerevisiae by activation of the PDR5 gene. In Candida albicans (Yeast), this protein is Fluconazole resistance protein 1 (FCR1).